The sequence spans 819 residues: Outer membrane usher protein CssD (819 aa).

Belongs to the fimbrial export usher family.

The protein resides in the cell outer membrane. In terms of biological role, involved in the export and assembly of C6 fimbrial subunits across the outer membrane. This Escherichia coli protein is Outer membrane usher protein CssD (cssD).